The primary structure comprises 79 residues: RNA-binding protein Hfq (79 aa).

The Sm domain maps to 10–69 (DPFLNALRKEHVPVSIYLVNGIKLQGNIESFDQYVVLLRNTVTQMVYKHAISTVVPARPV).

The protein belongs to the Hfq family. In terms of assembly, homohexamer.

Functionally, RNA chaperone that binds small regulatory RNA (sRNAs) and mRNAs to facilitate mRNA translational regulation in response to envelope stress, environmental stress and changes in metabolite concentrations. Also binds with high specificity to tRNAs. This chain is RNA-binding protein Hfq, found in Burkholderia cenocepacia (strain HI2424).